Consider the following 352-residue polypeptide: Quinolinate synthase (352 aa).

2 residues coordinate iminosuccinate: His-48 and Ser-69. Cys-114 is a binding site for [4Fe-4S] cluster. Iminosuccinate-binding positions include 140-142 (YAN) and Ser-157. Residue Cys-201 coordinates [4Fe-4S] cluster. Iminosuccinate-binding positions include 227–229 (HPE) and Thr-244. Cys-298 lines the [4Fe-4S] cluster pocket.

Belongs to the quinolinate synthase family. Type 1 subfamily. The cofactor is [4Fe-4S] cluster.

It localises to the cytoplasm. The catalysed reaction is iminosuccinate + dihydroxyacetone phosphate = quinolinate + phosphate + 2 H2O + H(+). It participates in cofactor biosynthesis; NAD(+) biosynthesis; quinolinate from iminoaspartate: step 1/1. Its function is as follows. Catalyzes the condensation of iminoaspartate with dihydroxyacetone phosphate to form quinolinate. The chain is Quinolinate synthase from Pseudomonas syringae pv. tomato (strain ATCC BAA-871 / DC3000).